Reading from the N-terminus, the 555-residue chain is Potassium-transporting ATPase potassium-binding subunit (555 aa).

10 helical membrane-spanning segments follow: residues isoleucine 2–isoleucine 22, glutamine 60–phenylalanine 80, isoleucine 130–phenylalanine 150, valine 173–threonine 193, methionine 246–tyrosine 266, isoleucine 278–glutamate 298, alanine 374–valine 394, leucine 412–leucine 432, leucine 483–leucine 503, and glycine 525–leucine 545.

Belongs to the KdpA family. The system is composed of three essential subunits: KdpA, KdpB and KdpC.

The protein localises to the cell membrane. Part of the high-affinity ATP-driven potassium transport (or Kdp) system, which catalyzes the hydrolysis of ATP coupled with the electrogenic transport of potassium into the cytoplasm. This subunit binds the extracellular potassium ions and delivers the ions to the membrane domain of KdpB through an intramembrane tunnel. This chain is Potassium-transporting ATPase potassium-binding subunit, found in Bacillus thuringiensis (strain Al Hakam).